Here is a 197-residue protein sequence, read N- to C-terminus: Holliday junction branch migration complex subunit RuvA (197 aa).

The interval 1–64 (MIASIRGILI…EDSLTLYGFE (64 aa)) is domain I. The tract at residues 65–145 (TVEQRQLFET…GLPTGAAVTP (81 aa)) is domain II. The interval 146–148 (AVA) is flexible linker. The interval 148 to 197 (AAANAELSEALISLGFTDAEAAAAIAALPSDAPPDLEERVRLALRYFSAS) is domain III.

The protein belongs to the RuvA family. In terms of assembly, homotetramer. Forms an RuvA(8)-RuvB(12)-Holliday junction (HJ) complex. HJ DNA is sandwiched between 2 RuvA tetramers; dsDNA enters through RuvA and exits via RuvB. An RuvB hexamer assembles on each DNA strand where it exits the tetramer. Each RuvB hexamer is contacted by two RuvA subunits (via domain III) on 2 adjacent RuvB subunits; this complex drives branch migration. In the full resolvosome a probable DNA-RuvA(4)-RuvB(12)-RuvC(2) complex forms which resolves the HJ.

The protein resides in the cytoplasm. In terms of biological role, the RuvA-RuvB-RuvC complex processes Holliday junction (HJ) DNA during genetic recombination and DNA repair, while the RuvA-RuvB complex plays an important role in the rescue of blocked DNA replication forks via replication fork reversal (RFR). RuvA specifically binds to HJ cruciform DNA, conferring on it an open structure. The RuvB hexamer acts as an ATP-dependent pump, pulling dsDNA into and through the RuvAB complex. HJ branch migration allows RuvC to scan DNA until it finds its consensus sequence, where it cleaves and resolves the cruciform DNA. The polypeptide is Holliday junction branch migration complex subunit RuvA (Roseiflexus sp. (strain RS-1)).